The sequence spans 360 residues: Serine/threonine transporter SstT (360 aa).

9 consecutive transmembrane segments (helical) span residues 17-37 (IGIG…ITVI), 40-60 (FGSL…LTLV), 78-98 (VICL…GASY), 138-158 (ALAT…GLAF), 179-199 (VVGW…FDTI), 212-232 (LLLL…NPLI), 295-315 (MAGA…TLGI), 316-336 (SVDF…AAGA), and 339-359 (VAGG…VPYV).

Belongs to the dicarboxylate/amino acid:cation symporter (DAACS) (TC 2.A.23) family.

It localises to the cell membrane. The enzyme catalyses L-serine(in) + Na(+)(in) = L-serine(out) + Na(+)(out). It catalyses the reaction L-threonine(in) + Na(+)(in) = L-threonine(out) + Na(+)(out). Functionally, involved in the import of serine and threonine into the cell, with the concomitant import of sodium (symport system). The polypeptide is Serine/threonine transporter SstT (Streptococcus suis (strain 05ZYH33)).